Here is a 525-residue protein sequence, read N- to C-terminus: Glutathione hydrolase-like YwrD proenzyme (525 aa).

T339 serves as the catalytic Nucleophile.

This sequence belongs to the gamma-glutamyltransferase family. As to quaternary structure, this enzyme consists of two polypeptide chains, which are synthesized from a single polypeptide. Post-translationally, cleaved by autocatalysis into a large and a small subunit.

The catalysed reaction is an N-terminal (5-L-glutamyl)-[peptide] + an alpha-amino acid = 5-L-glutamyl amino acid + an N-terminal L-alpha-aminoacyl-[peptide]. It carries out the reaction glutathione + H2O = L-cysteinylglycine + L-glutamate. The enzyme catalyses an S-substituted glutathione + H2O = an S-substituted L-cysteinylglycine + L-glutamate. Overexpressed protein with an N-terminal His tag has been reported not to hydrolyze glutathione; it is not clear if the construct is processed to 2 subunits. The chain is Glutathione hydrolase-like YwrD proenzyme (ywrD) from Bacillus subtilis (strain 168).